Consider the following 829-residue polypeptide: Pre-mRNA-splicing factor syf1 (829 aa).

12 HAT repeats span residues 15-47 (SLVSEEDFPYEQDIVRNPGSTKPWLAYIEYKLQ), 49-81 (GTVQEQAYIMERACVQLPRSYKLWKMYLRFRTK), 93-125 (SEYQKVNSLFERALILLNKMPRIWEMYLKFLMQ), 127-161 (PLVTHTRRTFDRALRALPITQHNRIWALYRPFANS), 163-182 (EGETAVKIWRRYMQVHPEDA), 277-312 (GSFERARDVFEEGITTVMTVRDFTLVFDSYTEFEES), 380-418 (DNKEEVVKTYLDAIEAIQPKKAVGALHQLWTNYAKFYEA), 420-456 (GDLSSARRIMEKAVKVPYKSVAELADMWIEWAEMELR), 473-505 (APKRSTVDYFDETLSPQQRVHKSWKLWSFYVDL), 544-578 (KYFEESFKIYERGLDLFSYPVAFELWNLYLTKAVD), 581-615 (ISIERLRDLFEQAVEDCPPKFAKVIYLMYGNLEEE), and 689-723 (GEIDRARAIYGHASQFCDPRTNPGFWTKWDQFEVQ). A disordered region spans residues 799–829 (AASEGPKGGSMPVQPVEVHNPDAIDLDEMDE).

Belongs to the crooked-neck family. In terms of assembly, associated with the spliceosome.

The protein localises to the nucleus. Its function is as follows. Involved in pre-mRNA splicing and cell cycle progression. The protein is Pre-mRNA-splicing factor syf1 (msp-41) of Neurospora crassa (strain ATCC 24698 / 74-OR23-1A / CBS 708.71 / DSM 1257 / FGSC 987).